Here is a 701-residue protein sequence, read N- to C-terminus: Polyribonucleotide nucleotidyltransferase (701 aa).

2 residues coordinate Mg(2+): Asp-487 and Asp-493. Positions 554 to 613 constitute a KH domain; that stretch reads PTMIAMKIDTDKIRDVIGKGGATIRAICEETKASIDIEDDGSIKIFGETKEAAEAAKQRI. One can recognise an S1 motif domain in the interval 623-691; sequence GKIYVGKVER…NRGRIKLSIK (69 aa).

This sequence belongs to the polyribonucleotide nucleotidyltransferase family. Component of the RNA degradosome, which is a multiprotein complex involved in RNA processing and mRNA degradation. Requires Mg(2+) as cofactor.

It localises to the cytoplasm. The catalysed reaction is RNA(n+1) + phosphate = RNA(n) + a ribonucleoside 5'-diphosphate. Involved in mRNA degradation. Catalyzes the phosphorolysis of single-stranded polyribonucleotides processively in the 3'- to 5'-direction. The protein is Polyribonucleotide nucleotidyltransferase of Pseudomonas putida (strain GB-1).